The primary structure comprises 139 residues: MAIIGIGIDIVNLERINKIILCYGNKFVKKILSFNEKKKYYELKNKKKNISVNFLAKRLAAKEAASKAFGLGMKKGLYFSQFEVLNNNLGKPYFKFNNTAKNLIKALNITNIHLSLTDERKYACATVIFEDNRTNIILS.

Mg(2+) contacts are provided by Asp-9 and Glu-63.

The protein belongs to the P-Pant transferase superfamily. AcpS family. It depends on Mg(2+) as a cofactor.

It localises to the cytoplasm. It catalyses the reaction apo-[ACP] + CoA = holo-[ACP] + adenosine 3',5'-bisphosphate + H(+). Functionally, transfers the 4'-phosphopantetheine moiety from coenzyme A to a Ser of acyl-carrier-protein. The chain is Holo-[acyl-carrier-protein] synthase from Wigglesworthia glossinidia brevipalpis.